Here is a 292-residue protein sequence, read N- to C-terminus: 4-hydroxy-tetrahydrodipicolinate synthase (292 aa).

A pyruvate-binding site is contributed by T45. Catalysis depends on Y134, which acts as the Proton donor/acceptor. Residue K162 is the Schiff-base intermediate with substrate of the active site. Residue V204 coordinates pyruvate.

The protein belongs to the DapA family. Homotetramer; dimer of dimers.

The protein resides in the cytoplasm. It carries out the reaction L-aspartate 4-semialdehyde + pyruvate = (2S,4S)-4-hydroxy-2,3,4,5-tetrahydrodipicolinate + H2O + H(+). It participates in amino-acid biosynthesis; L-lysine biosynthesis via DAP pathway; (S)-tetrahydrodipicolinate from L-aspartate: step 3/4. In terms of biological role, catalyzes the condensation of (S)-aspartate-beta-semialdehyde [(S)-ASA] and pyruvate to 4-hydroxy-tetrahydrodipicolinate (HTPA). This is 4-hydroxy-tetrahydrodipicolinate synthase from Marinobacter nauticus (strain ATCC 700491 / DSM 11845 / VT8) (Marinobacter aquaeolei).